The chain runs to 95 residues: Immunogenic miracidial antigen 8C (95 aa).

Positions 1 to 15 (EFTISFSSPVISTGQ) are enriched in polar residues. The tract at residues 1–95 (EFTISFSSPV…PKKYGSGHKY (95 aa)) is disordered. The span at 20 to 41 (GDEDYHDGDDDVDYTDDVDDVD) shows a compositional bias: acidic residues. A compositionally biased stretch (polar residues) spans 45 to 59 (GSPSQLLQGGYQRNQ).

Belongs to the immunogenic miracidial antigen family.

The protein is Immunogenic miracidial antigen 8C (8C) of Schistosoma japonicum (Blood fluke).